The following is a 392-amino-acid chain: UPF0229 protein CPF_1540 (392 aa).

The tract at residues 75 to 100 (VTTGTGEERRGDRISSDKRKAISNNK) is disordered. Positions 80–94 (GEERRGDRISSDKRK) are enriched in basic and acidic residues.

It belongs to the UPF0229 family.

This chain is UPF0229 protein CPF_1540, found in Clostridium perfringens (strain ATCC 13124 / DSM 756 / JCM 1290 / NCIMB 6125 / NCTC 8237 / Type A).